The sequence spans 790 residues: Histone-lysine N-methyltransferase, H3 lysine-9 specific SUVH6 (790 aa).

Residues 251 to 271 (QLRILGVGTSSGSSSGDSSRN) are disordered. The segment covering 256–268 (GVGTSSGSSSGDS) has biased composition (low complexity). The YDG domain maps to 330-482 (GEVPGVEVGD…MNVFKFQLRR (153 aa)). In terms of domain architecture, Pre-SET spans 551 to 613 (KSCCCTTRCT…SCYLRVTQHG (63 aa)). The Zn(2+) site is built by cysteine 553, cysteine 554, cysteine 555, cysteine 559, cysteine 567, cysteine 569, cysteine 595, cysteine 599, cysteine 601, and cysteine 605. In terms of domain architecture, SET spans 616–760 (LPLEIFKTKS…PLQELCYDYN (145 aa)). S-adenosyl-L-methionine-binding positions include 626–628 (RGW), aspartate 662, tyrosine 664, arginine 714, and 717–718 (NH). The Zn(2+) site is built by cysteine 720, cysteine 778, cysteine 780, and cysteine 785. In terms of domain architecture, Post-SET spans 774-790 (KQKPCFCGAAVCRRRLY).

The protein belongs to the class V-like SAM-binding methyltransferase superfamily. Histone-lysine methyltransferase family. Suvar3-9 subfamily.

The protein localises to the nucleus. It localises to the chromosome. Its subcellular location is the centromere. It carries out the reaction N(6)-methyl-L-lysyl(9)-[histone H3] + S-adenosyl-L-methionine = N(6),N(6)-dimethyl-L-lysyl(9)-[histone H3] + S-adenosyl-L-homocysteine + H(+). It catalyses the reaction L-lysyl(9)-[histone H3] + S-adenosyl-L-methionine = N(6)-methyl-L-lysyl(9)-[histone H3] + S-adenosyl-L-homocysteine + H(+). Its function is as follows. Histone methyltransferase. Methylates 'Lys-9' of histone H3. H3 'Lys-9' methylation represents a specific tag for epigenetic transcriptional repression. Seems to act preferentially on dsMRNA. The polypeptide is Histone-lysine N-methyltransferase, H3 lysine-9 specific SUVH6 (SUVH6) (Arabidopsis thaliana (Mouse-ear cress)).